The sequence spans 278 residues: HTH-type transcriptional activator RhaS (278 aa).

An HTH araC/xylS-type domain is found at 174–272 (NLLLAWLEDH…NWSPRDIRQG (99 aa)). DNA-binding regions (H-T-H motif) lie at residues 191–212 (DAVA…KQQT) and 239–262 (VTDI…RREF).

As to quaternary structure, binds DNA as a dimer.

Its subcellular location is the cytoplasm. Its function is as follows. Activates expression of the rhaBAD and rhaT operons. The polypeptide is HTH-type transcriptional activator RhaS (Shigella dysenteriae serotype 1 (strain Sd197)).